The primary structure comprises 207 residues: FMN-dependent NADH:quinone oxidoreductase 3 (207 aa).

FMN is bound by residues Ser-10 and 16 to 18; that span reads SIS.

The protein belongs to the azoreductase type 1 family. As to quaternary structure, homodimer. The cofactor is FMN.

It carries out the reaction 2 a quinone + NADH + H(+) = 2 a 1,4-benzosemiquinone + NAD(+). The catalysed reaction is N,N-dimethyl-1,4-phenylenediamine + anthranilate + 2 NAD(+) = 2-(4-dimethylaminophenyl)diazenylbenzoate + 2 NADH + 2 H(+). Its function is as follows. Quinone reductase that provides resistance to thiol-specific stress caused by electrophilic quinones. In terms of biological role, also exhibits azoreductase activity. Catalyzes the reductive cleavage of the azo bond in aromatic azo compounds to the corresponding amines. This is FMN-dependent NADH:quinone oxidoreductase 3 from Burkholderia lata (strain ATCC 17760 / DSM 23089 / LMG 22485 / NCIMB 9086 / R18194 / 383).